The chain runs to 176 residues: Transcription factor E (176 aa).

The 83-residue stretch at 8–90 folds into the HTH TFE/IIEalpha-type domain; that stretch reads EDPVIQKYLH…LWTFQYEKIP (83 aa).

This sequence belongs to the TFE family. In terms of assembly, monomer. Interaction with RNA polymerase subunits RpoF and RpoE is necessary for Tfe stimulatory transcription activity. Able to interact with Tbp and RNA polymerase in the absence of DNA promoter. Interacts both with the preinitiation and elongation complexes.

Functionally, transcription factor that plays a role in the activation of archaeal genes transcribed by RNA polymerase. Facilitates transcription initiation by enhancing TATA-box recognition by TATA-box-binding protein (Tbp), and transcription factor B (Tfb) and RNA polymerase recruitment. Not absolutely required for transcription in vitro, but particularly important in cases where Tbp or Tfb function is not optimal. It dynamically alters the nucleic acid-binding properties of RNA polymerases by stabilizing the initiation complex and destabilizing elongation complexes. Seems to translocate with the RNA polymerase following initiation and acts by binding to the non template strand of the transcription bubble in elongation complexes. The protein is Transcription factor E of Haloarcula marismortui (strain ATCC 43049 / DSM 3752 / JCM 8966 / VKM B-1809) (Halobacterium marismortui).